We begin with the raw amino-acid sequence, 280 residues long: Thylakoid lumenal protein TL20.3, chloroplastic (280 aa).

A chloroplast-targeting transit peptide spans 1–59; that stretch reads MAFSSLSPLPMKSLDISRSSSSVSRSPYHFQRYLLRRLQLSSRSNLEIKDSSNTREGCC. The transit peptide at 60 to 90 directs the protein to the thylakoid; sequence SSAESNTWKRILSAAMAAAVIASSSGVPAMA. Pentapeptide repeat domains are found at residues 124–163 and 169–208; these read ENFR…NFSG and TLMD…DFSD.

Interacts with thioredoxin. Interacts in vitro with LTO1.

Its subcellular location is the plastid. The protein resides in the chloroplast thylakoid lumen. Pentapeptide repeat protein of unknown function. Subject to degradation when reduced. This Arabidopsis thaliana (Mouse-ear cress) protein is Thylakoid lumenal protein TL20.3, chloroplastic.